Here is a 359-residue protein sequence, read N- to C-terminus: Probable dual-specificity RNA methyltransferase RlmN (359 aa).

Residue glutamate 91 is the Proton acceptor of the active site. Positions 97–329 constitute a Radical SAM core domain; the sequence is QHYGHSVCVT…KKNGVNCVVR (233 aa). The cysteines at positions 104 and 340 are disulfide-linked. Residues cysteine 111, cysteine 115, and cysteine 118 each coordinate [4Fe-4S] cluster. S-adenosyl-L-methionine is bound by residues 163 to 164, serine 195, 218 to 220, and asparagine 296; these read GE and SLH. The S-methylcysteine intermediate role is filled by cysteine 340.

This sequence belongs to the radical SAM superfamily. RlmN family. The cofactor is [4Fe-4S] cluster.

Its subcellular location is the cytoplasm. The enzyme catalyses adenosine(2503) in 23S rRNA + 2 reduced [2Fe-2S]-[ferredoxin] + 2 S-adenosyl-L-methionine = 2-methyladenosine(2503) in 23S rRNA + 5'-deoxyadenosine + L-methionine + 2 oxidized [2Fe-2S]-[ferredoxin] + S-adenosyl-L-homocysteine. It catalyses the reaction adenosine(37) in tRNA + 2 reduced [2Fe-2S]-[ferredoxin] + 2 S-adenosyl-L-methionine = 2-methyladenosine(37) in tRNA + 5'-deoxyadenosine + L-methionine + 2 oxidized [2Fe-2S]-[ferredoxin] + S-adenosyl-L-homocysteine. Functionally, specifically methylates position 2 of adenine 2503 in 23S rRNA and position 2 of adenine 37 in tRNAs. The sequence is that of Probable dual-specificity RNA methyltransferase RlmN from Streptococcus pyogenes serotype M3 (strain ATCC BAA-595 / MGAS315).